Reading from the N-terminus, the 691-residue chain is Lectin-domain containing receptor kinase VI.4 (691 aa).

The N-terminal stretch at Met-1–Ala-19 is a signal peptide. Over His-20–Val-306 the chain is Extracellular. The interval Thr-26–Ala-273 is legume-lectin like. A helical membrane pass occupies residues Ile-307–Phe-327. Topologically, residues Met-328–Arg-691 are cytoplasmic. In terms of domain architecture, Protein kinase spans Phe-363–Ile-641. Residues Val-369–Val-377 and Lys-392 contribute to the ATP site. Catalysis depends on Asp-491, which acts as the Proton acceptor.

This sequence in the C-terminal section; belongs to the protein kinase superfamily. Ser/Thr protein kinase family. In the N-terminal section; belongs to the leguminous lectin family.

The protein resides in the cell membrane. The catalysed reaction is L-seryl-[protein] + ATP = O-phospho-L-seryl-[protein] + ADP + H(+). It carries out the reaction L-threonyl-[protein] + ATP = O-phospho-L-threonyl-[protein] + ADP + H(+). Functionally, involved in negative regulation of abscisic acid response in seed germination. The protein is Lectin-domain containing receptor kinase VI.4 (LECRK64) of Arabidopsis thaliana (Mouse-ear cress).